Consider the following 108-residue polypeptide: uncharacterized protein (108 aa).

This is an uncharacterized protein from Schizosaccharomyces pombe (strain 972 / ATCC 24843) (Fission yeast).